A 462-amino-acid polypeptide reads, in one-letter code: Probable DNA-directed RNA polymerase subunit 343L (462 aa).

It belongs to the RNA polymerase beta' chain family.

It catalyses the reaction RNA(n) + a ribonucleoside 5'-triphosphate = RNA(n+1) + diphosphate. Component of the DNA-dependent RNA polymerase that catalyzes the transcription in the cytoplasm of viral DNA into RNA using the four ribonucleoside triphosphates as substrates. The protein is Probable DNA-directed RNA polymerase subunit 343L of Acheta domesticus (House cricket).